The primary structure comprises 474 residues: Glutathione synthetase (474 aa).

Arg125 serves as a coordination point for substrate. Glu144 is an ATP binding site. Mg(2+) contacts are provided by Glu144 and Asn146. Substrate contacts are provided by residues 148–151 (IAAS), 214–216 (QRN), Gln220, and 267–270 (RTGY). ATP-binding positions include Lys305, 364 to 373 (KPQREGGGNN), Tyr375, 398 to 401 (MDKI), and Glu425. Position 368 (Glu368) interacts with Mg(2+). Position 450 (Arg450) interacts with substrate. ATP is bound by residues Lys452 and Asp458. A substrate-binding site is contributed by 461–462 (VA).

It belongs to the eukaryotic GSH synthase family. In terms of assembly, homodimer. Requires Mg(2+) as cofactor. Expressed ubiquitously.

The enzyme catalyses gamma-L-glutamyl-L-cysteine + glycine + ATP = glutathione + ADP + phosphate + H(+). The catalysed reaction is gamma-L-glutamyl-(2S)-2-aminobutanoate + glycine + ATP = ophthalmate + ADP + phosphate + H(+). Its pathway is sulfur metabolism; glutathione biosynthesis; glutathione from L-cysteine and L-glutamate: step 2/2. In terms of biological role, catalyzes the production of glutathione from gamma-glutamylcysteine and glycine in an ATP-dependent manner. Glutathione (gamma-glutamylcysteinylglycine, GSH) is the most abundant intracellular thiol in living aerobic cells and is required for numerous processes including the protection of cells against oxidative damage, amino acid transport, the detoxification of foreign compounds, the maintenance of protein sulfhydryl groups in a reduced state and acts as a cofactor for a number of enzymes. Participates in ophthalmate biosynthesis in hepatocytes. The polypeptide is Glutathione synthetase (Xenopus laevis (African clawed frog)).